Consider the following 439-residue polypeptide: Enolase 1 (439 aa).

Histidine 160 and glutamate 169 together coordinate substrate. Glutamate 212 functions as the Proton donor in the catalytic mechanism. Mg(2+) is bound by residues aspartate 247, glutamate 296, and aspartate 323. Glutamate 296 and aspartate 323 together coordinate substrate. Lysine 348 serves as the catalytic Proton acceptor. Residues 375–378 (SHRS) and lysine 399 each bind substrate.

Belongs to the enolase family. As to quaternary structure, homodimer. The cofactor is Mg(2+).

The protein localises to the cytoplasm. It carries out the reaction (2R)-2-phosphoglycerate = phosphoenolpyruvate + H2O. Its pathway is carbohydrate degradation; glycolysis; pyruvate from D-glyceraldehyde 3-phosphate: step 4/5. This chain is Enolase 1 (ENO1), found in Debaryomyces hansenii (strain ATCC 36239 / CBS 767 / BCRC 21394 / JCM 1990 / NBRC 0083 / IGC 2968) (Yeast).